A 193-amino-acid chain; its full sequence is Transmembrane protein 066L (193 aa).

Transmembrane regions (helical) follow at residues 14 to 34 (VLFA…GLVW) and 48 to 68 (LVVE…LVVV).

This sequence belongs to the IIV-6 357R family.

Its subcellular location is the membrane. This chain is Transmembrane protein 066L, found in Invertebrate iridescent virus 3 (IIV-3).